The chain runs to 295 residues: Tyrosine recombinase XerC (295 aa).

Positions Met1–Val85 constitute a Core-binding (CB) domain. The Tyr recombinase domain occupies His106–Asp285. Catalysis depends on residues Arg145, Lys169, His237, Arg240, and His263. The active-site O-(3'-phospho-DNA)-tyrosine intermediate is the Tyr272.

Belongs to the 'phage' integrase family. XerC subfamily. Forms a cyclic heterotetrameric complex composed of two molecules of XerC and two molecules of XerD.

The protein resides in the cytoplasm. Site-specific tyrosine recombinase, which acts by catalyzing the cutting and rejoining of the recombining DNA molecules. The XerC-XerD complex is essential to convert dimers of the bacterial chromosome into monomers to permit their segregation at cell division. It also contributes to the segregational stability of plasmids. This chain is Tyrosine recombinase XerC, found in Haemophilus influenzae (strain PittEE).